The sequence spans 371 residues: Neuropeptide Y receptor type 6 (371 aa).

The Extracellular portion of the chain corresponds to 1–31 (MEVLTNQPTPNKTSGKSNNSAFFYFESCQPP). Residues N11 and N18 are each glycosylated (N-linked (GlcNAc...) asparagine). A helical transmembrane segment spans residues 32 to 52 (FLAILLLLIAYTVILIMGIFG). Topologically, residues 53 to 82 (NLSLIIIIFKKQREAQNVTNILIANLSLSD) are cytoplasmic. A helical membrane pass occupies residues 83-103 (ILVCVMCIPFTVIYTLMDHWV). Residues 104–111 (FGNTMCKL) are Extracellular-facing. An intrachain disulfide couples C109 to C196. The chain crosses the membrane as a helical span at residues 112–132 (TSYVQSVSVSVSIFSLVLIAI). Topologically, residues 133–150 (ERYQLIVNPRGWKPRVAH) are cytoplasmic. A helical membrane pass occupies residues 151 to 171 (AYWGIILIWLISLTLSIPLFL). Residues 172-206 (SYHLTNEPFHNLSLPTDIYTHQVACVEIWPSKLNQ) are Extracellular-facing. N-linked (GlcNAc...) asparagine glycosylation occurs at N182. A helical transmembrane segment spans residues 207-227 (LLFSTSLFMLQYFVPLGFILI). At 228 to 263 (CYLKIVLCLRKRTRQVDRRKENKSRLNENKRVNVML) the chain is on the cytoplasmic side. A helical membrane pass occupies residues 264-284 (ISIVVTFGACWLPLNIFNVIF). Topologically, residues 285-297 (DWYHEMLMSCHHD) are extracellular. The chain crosses the membrane as a helical span at residues 298–318 (LVFVVCHLIAMVSTCINPLFY). Topologically, residues 319-371 (GFLNKNFQKDLMMLIHHCWCGEPQESYENIAMSTMHTDESKGSLKLAHIPTGI) are cytoplasmic. C336 carries S-palmitoyl cysteine lipidation.

This sequence belongs to the G-protein coupled receptor 1 family. In terms of tissue distribution, kidney and discrete regions of the hypothalamus including the suprachiasmatic nucleus, anterior hypothalamus, bed nucleus stria terminalis, and the ventromedial nucleus.

The protein localises to the cell membrane. Its function is as follows. Receptor for neuropeptide Y and peptide YY. The rank order of affinity of this receptor for pancreatic polypeptides is NPY = PYY &gt;= NPY (2-36) = [Leu-31, Pro-34] NPY &gt; NPY (13-36) &gt; PP. The activity of this receptor is mediated by G proteins that inhibits adenylate cyclase activity. This is Neuropeptide Y receptor type 6 (Npy6r) from Mus musculus (Mouse).